Here is a 212-residue protein sequence, read N- to C-terminus: MGRLLVLEGIDGCGKTTQLQQLSSWLPKSGLMPDESRLVVTREPGGTALGTSLRQLLLHPPQDADPGPTAELLLYAADRAQHVDRVIQPALERGDWVLSDRFTGSTMAYQGYGRGLNRELITDLERIATRGLTPDMTVWLDIPLALSVQRRGSREEDRIEAEGLAFLERVSEGFSDMCKARDWVSVVADRPLLEVAEAIQTALLTRAAAWQR.

9-16 (GIDGCGKT) serves as a coordination point for ATP.

This sequence belongs to the thymidylate kinase family.

It catalyses the reaction dTMP + ATP = dTDP + ADP. Phosphorylation of dTMP to form dTDP in both de novo and salvage pathways of dTTP synthesis. This Synechococcus sp. (strain CC9311) protein is Thymidylate kinase.